The following is a 432-amino-acid chain: GTPase Obg (432 aa).

The Obg domain maps to 1-159 (MKFIDTAKFT…YEVKAELKVL (159 aa)). The OBG-type G domain maps to 160-332 (ADVGFVGLPN…LLLKIAKELE (173 aa)). Residues 166-173 (GLPNAGKS), 191-195 (FTTLN), 213-216 (DLPG), 284-287 (NKMD), and 313-315 (SGL) contribute to the GTP site. Residues Ser-173 and Thr-193 each contribute to the Mg(2+) site. The OCT domain maps to 354-432 (RLEEDEEDIQ…VFEYELEWMD (79 aa)).

Belongs to the TRAFAC class OBG-HflX-like GTPase superfamily. OBG GTPase family. As to quaternary structure, monomer. It depends on Mg(2+) as a cofactor.

It localises to the cytoplasm. Functionally, an essential GTPase which binds GTP, GDP and possibly (p)ppGpp with moderate affinity, with high nucleotide exchange rates and a fairly low GTP hydrolysis rate. Plays a role in control of the cell cycle, stress response, ribosome biogenesis and in those bacteria that undergo differentiation, in morphogenesis control. This chain is GTPase Obg, found in Mesoplasma florum (strain ATCC 33453 / NBRC 100688 / NCTC 11704 / L1) (Acholeplasma florum).